Reading from the N-terminus, the 217-residue chain is MKKPYRKISDYAIVGGLSALVMVSIVGCKSNADDKPKEQSSLSQSVQKGAFVILEEQKDKSYKVVEEYPSSRTHIVVRDLQGNERVLSNEEIQKLIKEEEAKIDNGTSKLIQPNNGGGGSNESSGFGLGSAILGSAAGAILGSYIGNKLFNNPNYQQNAQRTYKSPQAYQRSQNSFSKSAPSASSMGGASKGQSGFFGSSRPTSSPAVSSGTRGFNS.

The first 27 residues, 1-27, serve as a signal peptide directing secretion; sequence MKKPYRKISDYAIVGGLSALVMVSIVG. C28 is lipidated: N-palmitoyl cysteine. C28 carries S-diacylglycerol cysteine lipidation. A compositionally biased stretch (polar residues) spans 160 to 171; sequence QRTYKSPQAYQR. The disordered stretch occupies residues 160 to 217; the sequence is QRTYKSPQAYQRSQNSFSKSAPSASSMGGASKGQSGFFGSSRPTSSPAVSSGTRGFNS. The segment covering 172–210 has biased composition (low complexity); that stretch reads SQNSFSKSAPSASSMGGASKGQSGFFGSSRPTSSPAVSS.

This sequence belongs to the UPF0323 family.

The protein resides in the cell membrane. This chain is UPF0323 lipoprotein HPSH_01205, found in Helicobacter pylori (strain Shi470).